The following is a 212-amino-acid chain: Protein FAM177A1 (212 aa).

Methionine 1 is modified (N-acetylmethionine). Basic and acidic residues predominate over residues 1 to 11; it reads MEGEPASREEG. Residues 1 to 33 form a disordered region; it reads MEGEPASREEGEAVNASGAAAASAFRESAQQMS. The span at 13–29 shows a compositional bias: low complexity; it reads AVNASGAAAASAFRESA. Serine 69 is subject to Phosphoserine. At threonine 70 the chain carries Phosphothreonine. The stretch at 135–172 forms a coiled coil; it reads IDEYYRMKKEEEEEEEENRMSEEAERQYQQNKLQADSV. The disordered stretch occupies residues 146 to 179; sequence EEEEEENRMSEEAERQYQQNKLQADSVVQSDQPE. Residues 161-179 are compositionally biased toward polar residues; it reads QYQQNKLQADSVVQSDQPE.

It belongs to the FAM177 family.

In Bos taurus (Bovine), this protein is Protein FAM177A1 (FAM177A1).